The chain runs to 99 residues: Ribosomal processing cysteine protease Prp (99 aa).

The active-site Proton donor is the His16. The Nucleophile role is filled by Cys28.

It belongs to the Prp family. Homodimer.

In terms of biological role, an essential cysteine protease that cleaves the N-terminus from ribosomal protein bL27. The protein is Ribosomal processing cysteine protease Prp of Mycoplasma genitalium (strain ATCC 33530 / DSM 19775 / NCTC 10195 / G37) (Mycoplasmoides genitalium).